The following is a 239-amino-acid chain: Sensory rhodopsin-2 (239 aa).

Residues 1 to 3 lie on the Extracellular side of the membrane; it reads MVG. A helical membrane pass occupies residues 4 to 25; sequence LTTLFWLGAIGMLVGTLAFAWA. Topologically, residues 26–33 are cytoplasmic; that stretch reads GRDAGSGE. Residues 34–55 traverse the membrane as a helical segment; it reads RRYYVTLVGISGIAAVAYVVMA. Residues 56–69 are Extracellular-facing; it reads LGVGWVPVAERTVF. The helical transmembrane segment at 70–91 threads the bilayer; the sequence is APRYIDWILTTPLIVYFLGLLA. Residues 92–94 lie on the Cytoplasmic side of the membrane; sequence GLD. A helical membrane pass occupies residues 95 to 117; the sequence is SREFGIVITLNTVVMLAGFAGAM. Residues 118 to 121 are Extracellular-facing; it reads VPGI. A helical membrane pass occupies residues 122-149; the sequence is ERYALFGMGAVAFLGLVYYLVGPMTESA. At 150-153 the chain is on the cytoplasmic side; it reads SQRS. Residues 154 to 181 traverse the membrane as a helical segment; the sequence is SGIKSLYVRLRNLTVILWAIYPFIWLLG. The Extracellular portion of the chain corresponds to 182-189; the sequence is PPGVALLT. Residues 190 to 222 traverse the membrane as a helical segment; the sequence is PTVDVALIVYLDLVTKVGFGFIALDAAATLRAE. The residue at position 205 (Lys205) is an N6-(retinylidene)lysine. The Cytoplasmic segment spans residues 223–239; the sequence is HGESLAGVDTDAPAVAD.

This sequence belongs to the archaeal/bacterial/fungal opsin family. As to quaternary structure, homodimer. Interacts with HTR-II.

The protein localises to the cell membrane. Photophobic photoreceptor responsible for the negative phototaxis. Activates the sensory rhodopsin II transducer (HTR-II) in response to blue light. This chain is Sensory rhodopsin-2 (sop2), found in Natronomonas pharaonis (Natronobacterium pharaonis).